The following is a 232-amino-acid chain: Sugar fermentation stimulation protein homolog (232 aa).

Belongs to the SfsA family.

This chain is Sugar fermentation stimulation protein homolog, found in Shouchella clausii (strain KSM-K16) (Alkalihalobacillus clausii).